The sequence spans 20 residues: VVGGDECNINEHRSLALMYA.

One can recognise a Peptidase S1 domain in the interval Val-1–Ala-20.

It belongs to the peptidase S1 family. Snake venom subfamily. As to quaternary structure, monomer. In terms of processing, glycosylated. As to expression, expressed by the venom gland.

It localises to the secreted. Its activity is regulated as follows. Inhibited by calcium. Snake venom serine protease that selectively cleaves the heavy chain of protein C (PROC). This activation is thrombomodulin-independent. In Agkistrodon bilineatus (Cantil), this protein is Protein C activator.